A 429-amino-acid polypeptide reads, in one-letter code: Actin-like protein 6A (429 aa).

The residue at position 2 (S2) is an N-acetylserine. A Glycyl lysine isopeptide (Lys-Gly) (interchain with G-Cter in SUMO2) cross-link involves residue K62. A phosphoserine mark is found at S86 and S233.

The protein belongs to the actin family. In terms of assembly, component of numerous complexes with chromatin remodeling and histone acetyltransferase activity. Component of the NuA4 histone acetyltransferase complex which contains the catalytic subunit KAT5/TIP60 and the subunits EP400, TRRAP/PAF400, BRD8/SMAP, EPC1, DMAP1/DNMAP1, RUVBL1/TIP49, RUVBL2, ING3, actin, ACTL6A/BAF53A, MORF4L1/MRG15, MORF4L2/MRGX, MRGBP, YEATS4/GAS41, VPS72/YL1 and MEAF6. The NuA4 complex interacts with MYC and the adenovirus E1A protein. Component of a NuA4-related complex which contains EP400, TRRAP/PAF400, SRCAP, BRD8/SMAP, EPC1, DMAP1/DNMAP1, RUVBL1/TIP49, RUVBL2, actin, ACTL6A/BAF53A, VPS72 and YEATS4/GAS41. Component of the multiprotein chromatin-remodeling complexes SWI/SNF: SWI/SNF-A (BAF), SWI/SNF-B (PBAF) and related complexes. The canonical complex contains a catalytic subunit (either SMARCA4/BRG1/BAF190A or SMARCA2/BRM/BAF190B) and at least SMARCE1, ACTL6A/BAF53, SMARCC1/BAF155, SMARCC2/BAF170, and SMARCB1/SNF5/BAF47. Other subunits specific to each of the complexes may also be present permitting several possible combinations developmentally and tissue specific. Component of the BAF complex, which includes at least actin (ACTB), ARID1A/BAF250A, ARID1B/BAF250B, SMARCA2/BRM, SMARCA4/BRG1/BAF190A, ACTL6A/BAF53, ACTL6B/BAF53B, SMARCE1/BAF57, SMARCC1/BAF155, SMARCC2/BAF170, SMARCB1/SNF5/INI1, and one or more SMARCD1/BAF60A, SMARCD2/BAF60B, or SMARCD3/BAF60C. In muscle cells, the BAF complex also contains DPF3. Component of the BAF53 complex, at least composed of ACTL6A/BAF53A, RUVBL1/TIP49, SMARCA2/BRM/BAF190B and TRRAP/PAF400, and which may also include a HAT activity related to, but distinct from, that of KAT5. Component of neural progenitors-specific chromatin remodeling complex (npBAF complex) composed of at least, ARID1A/BAF250A or ARID1B/BAF250B, SMARCD1/BAF60A, SMARCD3/BAF60C, SMARCA2/BRM/BAF190B, SMARCA4/BRG1/BAF190A, SMARCB1/BAF47, SMARCC1/BAF155, SMARCE1/BAF57, SMARCC2/BAF170, PHF10/BAF45A, ACTL6A/BAF53A and actin. Component of SWI/SNF (GBAF) subcomplex, which includes at least BICRA or BICRAL (mutually exclusive), BRD9, SS18, SMARCA2/BRM, SMARCA4/BRG1/BAF190A, ACTL6A/BAF53, SMARCC1/BAF155, and SMARCD1/BAF60A. May be a component of the SWI/SNF-B (PBAF) chromatin remodeling complex, at least composed of SMARCA4/BRG1, SMARCB1/BAF47/SNF5, ACTL6A/BAF53A or ACTL6B/BAF53B, SMARCE1/BAF57, SMARCD1/BAF60A, SMARCD2/BAF60B, perhaps SMARCD3/BAF60C, SMARCC1/BAF155, SMARCC2/BAF170, PBRM1/BAF180, ARID2/BAF200 and actin. Interacts with SMARCA4/BRG1/BAF190A. Interacts with PHF10/BAF45A. Component of the chromatin remodeling INO80 complex; specifically part of a complex module associated with the DBINO domain of INO80. Interacts with DPF2. As to expression, widely expressed. Expressed selectively in neural stem and progenitor cells (at protein level).

It localises to the nucleus. Functionally, involved in transcriptional activation and repression of select genes by chromatin remodeling (alteration of DNA-nucleosome topology). Component of SWI/SNF chromatin remodeling complexes that carry out key enzymatic activities, changing chromatin structure by altering DNA-histone contacts within a nucleosome in an ATP-dependent manner. Required for maximal ATPase activity of SMARCA4/BRG1/BAF190A and for association of the SMARCA4/BRG1/BAF190A containing remodeling complex BAF with chromatin/nuclear matrix. Belongs to the neural progenitors-specific chromatin remodeling complex (npBAF complex) and is required for the proliferation of neural progenitors. During neural development a switch from a stem/progenitor to a postmitotic chromatin remodeling mechanism occurs as neurons exit the cell cycle and become committed to their adult state. The transition from proliferating neural stem/progenitor cells to postmitotic neurons requires a switch in subunit composition of the npBAF and nBAF complexes. As neural progenitors exit mitosis and differentiate into neurons, npBAF complexes which contain ACTL6A/BAF53A and PHF10/BAF45A, are exchanged for homologous alternative ACTL6B/BAF53B and DPF1/BAF45B or DPF3/BAF45C subunits in neuron-specific complexes (nBAF). The npBAF complex is essential for the self-renewal/proliferative capacity of the multipotent neural stem cells. The nBAF complex along with CREST plays a role regulating the activity of genes essential for dendrite growth. Component of the NuA4 histone acetyltransferase (HAT) complex which is involved in transcriptional activation of select genes principally by acetylation of nucleosomal histones H4 and H2A. This modification may both alter nucleosome - DNA interactions and promote interaction of the modified histones with other proteins which positively regulate transcription. This complex may be required for the activation of transcriptional programs associated with oncogene and proto-oncogene mediated growth induction, tumor suppressor mediated growth arrest and replicative senescence, apoptosis, and DNA repair. NuA4 may also play a direct role in DNA repair when recruited to sites of DNA damage. Putative core component of the chromatin remodeling INO80 complex which is involved in transcriptional regulation, DNA replication and probably DNA repair. This Mus musculus (Mouse) protein is Actin-like protein 6A (Actl6a).